We begin with the raw amino-acid sequence, 269 residues long: E3 ubiquitin-protein ligase complex slx8-rfp subunit slx8 (269 aa).

Basic and acidic residues predominate over residues 1 to 10 (MPPAHKRDTN). Disordered stretches follow at residues 1–75 (MPPA…LNRA) and 166–196 (PRKQ…QVVP). Over residues 60 to 70 (PSGTTSENESL) the composition is skewed to polar residues. The RING-type zinc-finger motif lies at 206–247 (CVICLDSPENLSCTPCGHIFCNFCILSALGTTAATQKCPVCR).

As to quaternary structure, part of an E3 ubiquitin complex including rfp1, rfp2 and slx8. Interacts with rfp1 and rfp2.

Its subcellular location is the nucleus. It catalyses the reaction S-ubiquitinyl-[E2 ubiquitin-conjugating enzyme]-L-cysteine + [acceptor protein]-L-lysine = [E2 ubiquitin-conjugating enzyme]-L-cysteine + N(6)-ubiquitinyl-[acceptor protein]-L-lysine.. The protein operates within protein modification; protein ubiquitination. Functionally, mediates ubiquitination and subsequent desumoylation/degradation of sumoylated proteins and proteins containing SUMO-like domains. Acts as a critical suppressor of gross chromosomal rearrangements (GCRs) during normal cell cycle progression. Involved in stabilizing, restarting or resolving transiently stalled replication forks. Prevents accumulation of DNA damage during cell cycle progression. The polypeptide is E3 ubiquitin-protein ligase complex slx8-rfp subunit slx8 (slx8) (Schizosaccharomyces pombe (strain 972 / ATCC 24843) (Fission yeast)).